The sequence spans 169 residues: uncharacterized protein (169 aa).

A run of 2 helical transmembrane segments spans residues 62 to 84 and 94 to 116; these read RWGFFAGGLIFLVSSAIMYLLGL and ALMLFVLPTAFLFVSLLLLYWWF.

Its subcellular location is the cell membrane. This is an uncharacterized protein from Archaeoglobus fulgidus (strain ATCC 49558 / DSM 4304 / JCM 9628 / NBRC 100126 / VC-16).